We begin with the raw amino-acid sequence, 173 residues long: MARMNRPAPVEVSYRHMRFLITHNPSNATLSTFIEDLKKYGATTVVRVCEVTYDKTPLEKDGITVVDWPFDDGAPPPGKVVEDWLSLLKAKFYNDPGSCVAVHCVAGLGRAPVLVALALIESGMKYEDAIQFIRQKRRGAINSKQLTYLEKYRPKQRLRFKDPHTHKTRCCVM.

One can recognise a Tyrosine-protein phosphatase domain in the interval 8 to 161 (APVEVSYRHM…YRPKQRLRFK (154 aa)). Residues cysteine 49 and cysteine 104 are joined by a disulfide bond. Catalysis depends on aspartate 72, which acts as the Proton donor. Cysteine 104 acts as the Phosphocysteine intermediate in catalysis. Arginine 110 lines the substrate pocket. Position 170 is a cysteine methyl ester (cysteine 170). Cysteine 170 carries the S-farnesyl cysteine lipid modification. Residues 171 to 173 (CVM) constitute a propeptide, removed in mature form.

It belongs to the protein-tyrosine phosphatase family. Interacts with tubulin. Farnesylated. Farnesylation is required for membrane targeting. Unfarnesylated forms are shifted into the nucleus. As to expression, present in the small intestine, where it is located in the differentiated epithelial cells of the villus but not in the proliferating crypt cells (at protein level). Expressed in heart and skeletal muscle, and at lower levels in lung, spleen and testis.

The protein resides in the cell membrane. It localises to the early endosome. The catalysed reaction is O-phospho-L-tyrosyl-[protein] + H2O = L-tyrosyl-[protein] + phosphate. With respect to regulation, inhibited by sodium orthovanadate and peroxovanadium compounds, and by pentamidine. In terms of biological role, protein tyrosine phosphatase which stimulates progression from G1 into S phase during mitosis. Enhances cell proliferation, cell motility and invasive activity, and promotes cancer metastasis. May be involved in the progression of cardiac hypertrophy by inhibiting intracellular calcium mobilization in response to angiotensin II. The sequence is that of Protein tyrosine phosphatase type IVA 3 (Ptp4a3) from Mus musculus (Mouse).